An 897-amino-acid polypeptide reads, in one-letter code: Interleukin enhancer-binding factor 3-A (897 aa).

The DZF domain occupies 5–379 (RIFLNDDRHV…PLKRPIEEDG (375 aa)). Disordered stretches follow at residues 52–85 (QEKDCSGEQEQPMAEETETTEEGKDSEMKTGENP), 364–403 (TTYAMPPLKRPIEEDGDDKSPSKKKKKIQKKDEKSEPPQV), and 466–502 (MGLPTGMEEKEEGTDESEQKPVVQTPAQPDDSAEVDS). 2 stretches are compositionally biased toward basic and acidic residues: residues 72 to 81 (EEGKDSEMKT) and 373 to 384 (RPIEEDGDDKSP). Positions 372–390 (KRPIEEDGDDKSPSKKKKK) match the Bipartite nuclear localization signal motif. 2 consecutive DRBM domains span residues 399–468 (EPPQ…DMGL) and 521–587 (HGKN…KLFP). Disordered regions lie at residues 627–650 (PPPQAMRGRGRGGMNRGRGRGRGG) and 708–797 (GDSY…AQGA). Gly residues predominate over residues 637–650 (RGGMNRGRGRGRGG). Pro residues predominate over residues 714–747 (PTPPKPFVNKKPPPPQQQQQQQPPPQHASNPPKP). Over residues 749–794 (YNQGYQGHQGGQQQQQQQQQQQTYNQNQYSNYGPPQKQKGGYNQGA) the composition is skewed to low complexity.

As to quaternary structure, a component of a ybx2/frgy2-containing mRNA-ribonucleoprotein (mRNP) complex. Also a component of the CCAAT box transcription factor (CBTF) complex. In terms of processing, phosphorylated. Phosphorylation affects nuclear translocation. Post-translationally, methylated by protein arginine N-methyltransferase 1 (prmt1b) in the RGG-rich domain. Methylation decreases DNA-binding and thereby decreases transcription of the gata2 gene, but does not regulate dsRNA binding or subcellular localization. As to expression, expressed mainly in the ectoderm (at protein level).

It is found in the nucleus. It localises to the cytoplasm. Its function is as follows. RNA-binding protein that plays an essential role in the biogenesis of circular RNAs (circRNAs) which are produced by back-splicing circularization of pre-mRNAs. Within the nucleus, promotes circRNAs processing by stabilizing the regulatory elements residing in the flanking introns of the circularized exons. Plays thereby a role in the back-splicing of a subset of circRNAs. As a consequence, participates in a wide range of transcriptional and post-transcriptional processes. Binds to poly-U elements and AU-rich elements (AREs) in the 3'-UTR of target mRNAs. Upon viral infection, ILF3 accumulates in the cytoplasm and participates in the innate antiviral response. Mechanistically, ILF3 becomes phosphorylated and activated by the double-stranded RNA-activated protein kinase/PKR which releases ILF3 from cellular mature circRNAs. In turn, unbound ILF3 molecules are able to interact with and thus inhibit viral mRNAs. Has a cytoplasmic role early in development as part of a ribonucleoprotein (mRNP) complex which may regulate mRNA transport and/or translation. Following nuclear localization at the mid-blastula transition, acts as a transcription factor and binds the 5'-CCAAT-3' promoter sequence to regulate transcription of the gata2 gene as a subunit of the CCAAT box transcription factor (CBTF). Its role as an mRNP component negatively regulates its activity as a transcription factor by precluding its nuclear localization. The polypeptide is Interleukin enhancer-binding factor 3-A (ilf3-a) (Xenopus laevis (African clawed frog)).